A 378-amino-acid chain; its full sequence is Succinyl-diaminopimelate desuccinylase (378 aa).

H67 lines the Zn(2+) pocket. Residue D69 is part of the active site. D100 contacts Zn(2+). Catalysis depends on E134, which acts as the Proton acceptor. Zn(2+) contacts are provided by E135, E163, and H349.

It belongs to the peptidase M20A family. DapE subfamily. Homodimer. It depends on Zn(2+) as a cofactor. Co(2+) serves as cofactor.

It carries out the reaction N-succinyl-(2S,6S)-2,6-diaminopimelate + H2O = (2S,6S)-2,6-diaminopimelate + succinate. Its pathway is amino-acid biosynthesis; L-lysine biosynthesis via DAP pathway; LL-2,6-diaminopimelate from (S)-tetrahydrodipicolinate (succinylase route): step 3/3. In terms of biological role, catalyzes the hydrolysis of N-succinyl-L,L-diaminopimelic acid (SDAP), forming succinate and LL-2,6-diaminopimelate (DAP), an intermediate involved in the bacterial biosynthesis of lysine and meso-diaminopimelic acid, an essential component of bacterial cell walls. In Nitrosospira multiformis (strain ATCC 25196 / NCIMB 11849 / C 71), this protein is Succinyl-diaminopimelate desuccinylase.